We begin with the raw amino-acid sequence, 405 residues long: MNQQLSCDHLWFGADIVTMQNGRYGIIEQGAIAVSGQQIIWVGPYADSAHIQARQRTDLGGGIVTPGLVDCHTHLVFGGDRSDEFEQRLNGVSYSEIAAQVGGILATVRATRSASQAELVDAARQRLQHLLAEGVTTVEIKSGYGLEVASELRMLQAIRQLAQQVPAQIQATCLAAHAVPPEYRHDPEAWVDVICDQLLPQVAAEGLADAVDAFCEHLAFSPDQVRRVFIAAKALGFALKLHAEQLSSLGGSALAAEFDALSADHVEYATESDVAAMAQHGTVAVLLPGAFYLLREKQRPPVELFRRYQVPMALASDANPGTSPALSLRLMMNMGCTLFGMTPEEALAGVTLHAARALGLAQRIGSLESGKMADFVHWPLARPAELVYWLGGQLPCRVIFRGEER.

Residues His-72 and His-74 each coordinate Fe(3+). 2 residues coordinate Zn(2+): His-72 and His-74. Positions 81, 144, and 177 each coordinate 4-imidazolone-5-propanoate. N-formimidoyl-L-glutamate is bound at residue Tyr-144. Position 242 (His-242) interacts with Fe(3+). Position 242 (His-242) interacts with Zn(2+). Gln-245 is a 4-imidazolone-5-propanoate binding site. Residue Asp-317 coordinates Fe(3+). A Zn(2+)-binding site is contributed by Asp-317. Residues Asn-319 and Gly-321 each contribute to the N-formimidoyl-L-glutamate site. Residue Thr-322 coordinates 4-imidazolone-5-propanoate.

It belongs to the metallo-dependent hydrolases superfamily. HutI family. It depends on Zn(2+) as a cofactor. The cofactor is Fe(3+).

It localises to the cytoplasm. It catalyses the reaction 4-imidazolone-5-propanoate + H2O = N-formimidoyl-L-glutamate. It functions in the pathway amino-acid degradation; L-histidine degradation into L-glutamate; N-formimidoyl-L-glutamate from L-histidine: step 3/3. In terms of biological role, catalyzes the hydrolytic cleavage of the carbon-nitrogen bond in imidazolone-5-propanoate to yield N-formimidoyl-L-glutamate. It is the third step in the universal histidine degradation pathway. This is Imidazolonepropionase from Erwinia tasmaniensis (strain DSM 17950 / CFBP 7177 / CIP 109463 / NCPPB 4357 / Et1/99).